The sequence spans 442 residues: Protein bag of marbles (442 aa).

The required for interaction with ubiquitin stretch occupies residues 201–250 (FDMPVKSTMPKSLNVRYQLQVLCTKVERFLVQQRRTLEANRHFDFEKYDE). The tract at residues 408–442 (VSMEQPSASEEEFEETEEVPSSPPRHTGRVPRFRS) is disordered. Positions 416–425 (SEEEFEETEE) are enriched in acidic residues. A compositionally biased stretch (basic residues) spans 433–442 (HTGRVPRFRS).

Interacts (via central region) with ubiquitin. Interacts (via C-terminus) with otu (via OTU domain); the interaction enhances otu aggregation into amyloid-like structures and enhances its deubiquitinase activity. Together with otu interacts with CycA/cyclin-A (via C-terminus); the interaction stabilizes CycA by promoting and enhancing otu dependent deubiquitination of CycA. Together with otu interacts with Traf6. Part of a complex composed of at least tut, bam and bgcn; complex formation does not require RNA. Interacts (via C-terminus) with bgcn; the interaction is direct and is not disrupted by eIF4A. Interacts with eIF4A (via multiple contacts); the interaction is direct and is not disrupted by bgcn. Interacts (via N-terminus) with tut; the interaction is direct and mediates the interaction between tut and bgcn. As part of the bam-bgcn-tut complex associates with twin; may recruit the CCR4-NOT1 deadenylation complex to mRNA 3'-UTRs to mediate post-transcriptional regulation of expression. Part of a complex composed of at least mei-P26, bam, bgcn and Sxl; this complex is involved in translational repression of nanos mRNA. In terms of processing, ubiquitinated (C-terminal region). As to expression, in cystoblasts and/or very early cystocytes in testis (at protein level); expression levels are regulated by mei-P26. In cystoblasts and/or very early cystocytes in ovary. Expressed in the gut; expression levels increase with age.

Its subcellular location is the cytoplasm. In terms of biological role, regulatory component of a deubiquitinase complex consisting of bam and otu. The complex deubiquitinates K63-linked polyubiquitinated proteins, antagonizing the ubiquitination activity of Traf6 and regulating the IMD immune signaling pathway. Otu-bam deubiquitinase activity is regulated by Traf6 dependent immune signaling regulation of bam expression levels; this forms a feedback loop that regulates the IMD immune signaling pathway and balances gut immune activity during aging. The complex deubiquitinates and stabilizes CycA/cyclin-A to regulate CycA-dependent differentiation. Required to initiate both male and female gametogenesis. Part of a complex with bgcn involved in 3'-UTR-dependent translational repression of a subset of mRNAs, including those for mei-P26, nanos and shg/E-cadherin. Repression of mei-P26 is targeted by let-7 miRNA. Involved in a regulatory cascade with mei-P26 to control the progression of cystocytes through transit amplification and the switch to spermatocyte differentiation; mei-P26 facilitates bam accumulation, which in turn represses translation of mei-P26. Forms a complex with tut and bgcn involved in 3'-UTR-dependent post-transcriptional repression of several 3'-RNA processing factors, which promotes germline stem cell lineage differentiation and mitosis-to-meiosis transition. The sequence is that of Protein bag of marbles from Drosophila melanogaster (Fruit fly).